Consider the following 484-residue polypeptide: Protein nucleotidyltransferase YdiU (484 aa).

Residues glycine 81, glycine 83, arginine 84, lysine 103, aspartate 115, glycine 116, arginine 166, and arginine 173 each contribute to the ATP site. The active-site Proton acceptor is aspartate 244. The Mg(2+) site is built by asparagine 245 and aspartate 254. Aspartate 254 contributes to the ATP binding site.

This sequence belongs to the SELO family. Mg(2+) is required as a cofactor. The cofactor is Mn(2+).

It carries out the reaction L-seryl-[protein] + ATP = 3-O-(5'-adenylyl)-L-seryl-[protein] + diphosphate. The enzyme catalyses L-threonyl-[protein] + ATP = 3-O-(5'-adenylyl)-L-threonyl-[protein] + diphosphate. It catalyses the reaction L-tyrosyl-[protein] + ATP = O-(5'-adenylyl)-L-tyrosyl-[protein] + diphosphate. The catalysed reaction is L-histidyl-[protein] + UTP = N(tele)-(5'-uridylyl)-L-histidyl-[protein] + diphosphate. It carries out the reaction L-seryl-[protein] + UTP = O-(5'-uridylyl)-L-seryl-[protein] + diphosphate. The enzyme catalyses L-tyrosyl-[protein] + UTP = O-(5'-uridylyl)-L-tyrosyl-[protein] + diphosphate. Functionally, nucleotidyltransferase involved in the post-translational modification of proteins. It can catalyze the addition of adenosine monophosphate (AMP) or uridine monophosphate (UMP) to a protein, resulting in modifications known as AMPylation and UMPylation. The chain is Protein nucleotidyltransferase YdiU from Shewanella oneidensis (strain ATCC 700550 / JCM 31522 / CIP 106686 / LMG 19005 / NCIMB 14063 / MR-1).